Reading from the N-terminus, the 364-residue chain is DNA-(apurinic or apyrimidinic site) endonuclease (364 aa).

Composition is skewed to basic and acidic residues over residues 1–12 (MKRFFKPIEKEN) and 23–39 (PEKR…EKNQ). Residues 1–42 (MKRFFKPIEKENSPAAKKPCLSPEKRDGDGDGVEEEKNQNEP) are disordered. Residue glutamate 80 coordinates Mg(2+). Residue tyrosine 182 is part of the active site. Positions 222, 224, and 342 each coordinate Mg(2+). Catalysis depends on aspartate 222, which acts as the Proton donor/acceptor.

The protein belongs to the DNA repair enzymes AP/exoA family. Interacts with ROS1. ROS1 is required for APE1L to stably associate with the DNA substrate. Mg(2+) is required as a cofactor. Expressed in leaves, flower buds and developing siliques. Not detected in roots.

The protein resides in the nucleus. It is found in the nucleolus. In terms of biological role, apurinic/apyrimidinic (AP) endonuclease involved in active DNA demethylation and gene imprinting. According to a report, also displays an in vitro 3'-phosphatase activity. According to another report, has no in vitro 3'-phosphatase activity. Catalyzes the conversion of the 3'-blocking groups 3'-phosphor-alpha,beta-unsaturated aldehyde (3'-PUA) generated by ROS1 to 3'-OH. Has a strong non-specific affinity to DNA. Redundant with APE2 and at least one functional allele is required for seed viability. In Arabidopsis thaliana (Mouse-ear cress), this protein is DNA-(apurinic or apyrimidinic site) endonuclease.